A 124-amino-acid polypeptide reads, in one-letter code: Large ribosomal subunit protein bL21 (124 aa).

The protein belongs to the bacterial ribosomal protein bL21 family. In terms of assembly, part of the 50S ribosomal subunit. Contacts protein L20.

Functionally, this protein binds to 23S rRNA in the presence of protein L20. The sequence is that of Large ribosomal subunit protein bL21 from Synechococcus sp. (strain WH7803).